Reading from the N-terminus, the 395-residue chain is 8-amino-7-oxononanoate synthase (395 aa).

R24 provides a ligand contact to substrate. 111–112 (GF) is a binding site for pyridoxal 5'-phosphate. H136 is a binding site for substrate. Residues S184, 209 to 212 (DDAH), and 240 to 243 (TLSK) each bind pyridoxal 5'-phosphate. K243 carries the post-translational modification N6-(pyridoxal phosphate)lysine. Residue T357 participates in substrate binding.

This sequence belongs to the class-II pyridoxal-phosphate-dependent aminotransferase family. BioF subfamily. As to quaternary structure, homodimer. It depends on pyridoxal 5'-phosphate as a cofactor.

The catalysed reaction is 6-carboxyhexanoyl-[ACP] + L-alanine + H(+) = (8S)-8-amino-7-oxononanoate + holo-[ACP] + CO2. The protein operates within cofactor biosynthesis; biotin biosynthesis. In terms of biological role, catalyzes the decarboxylative condensation of pimeloyl-[acyl-carrier protein] and L-alanine to produce 8-amino-7-oxononanoate (AON), [acyl-carrier protein], and carbon dioxide. This is 8-amino-7-oxononanoate synthase from Thermoanaerobacter pseudethanolicus (strain ATCC 33223 / 39E) (Clostridium thermohydrosulfuricum).